The primary structure comprises 342 residues: Phomopsin biosynthesis cluster protein B' (342 aa).

Residues 1–22 (MESIAKAKSLPNKGRTYDSQRP) are disordered. A helical transmembrane segment spans residues 87 to 107 (VLIIGCAVISLFAIIGALGFA). The tract at residues 118 to 186 (CASPAHQNPH…QCGESPDEAQ (69 aa)) is disordered. The span at 144–155 (HSGSHSSSSSTN) shows a compositional bias: low complexity. The N-linked (GlcNAc...) asparagine glycan is linked to Asn-248.

The protein resides in the membrane. Part of the gene cluster that mediates the biosynthesis of the phomopsins, a group of hexapeptide mycotoxins which infects lupins and causes lupinosis disease in livestock. The role of phomB' within the phomopsins biosynthesis pathway has still to be determined. The pathway starts with the processing of the precursor phomA by several endopeptidases including kexin proteases as well as the cluster-specific S41 family peptidase phomP1 and the oligopeptidase phomG to produce 10 identical copies of the hexapeptide Tyr-Val-Ile-Pro-Ile-Asp. After being excised from the precursor peptide, the core peptides are cyclized and modified post-translationally by enzymes encoded within the gene cluster. The timing and order of proteolysis of the phomA precursor and PTMs are still unknown. Two tyrosinase-like enzymes, phomQ1 and phomQ2, catalyze the chlorination and hydroxylation of Tyr, respectively. PhomYb, is proposed to be involved in the construction of the macrocyclic structure. The other 4 ustYa family proteins may be involved in PTMs that generate the unique structure of phomopsin A. PhomYa is required for the hydroxylation of C-beta of Tyr. PhomYc, phomYd, and phomYe are responsible for the biosynthesis of 2,3-dehydroisoleucine (dIle), 2,3-dehydroaspartic acid (dAsp), and 3,4-dehydroproline (dPro), respectively. While dIle formation by phomYc is indispensable for the installation of dAsp by phomYd, the order of the other PTMs have not been elucidated yet. Most of the biosynthetic enzymes likely have broad substrate specificity, and thus, there might be a metabolic grid from a precursor to phomopsin A. The enzyme(s) responsible for the biosynthesis of 3,4-dehydrovaline (dVal) have also not been identified yet. Finally, phomM acts as an S-adenosylmethionine-dependent alpha-N-methyltransferase that catalyzes two successive N-methylation reactions, converting N-desmethyl-phomopsin A to phomopsin A and phomopsin A further to an N,N-dimethylated congener called phomopsin E. The polypeptide is Phomopsin biosynthesis cluster protein B' (Diaporthe leptostromiformis (Lupinosis disease fungus)).